Here is a 390-residue protein sequence, read N- to C-terminus: Lipid-A-disaccharide synthase (390 aa).

It belongs to the LpxB family.

The catalysed reaction is a lipid X + a UDP-2-N,3-O-bis[(3R)-3-hydroxyacyl]-alpha-D-glucosamine = a lipid A disaccharide + UDP + H(+). The protein operates within bacterial outer membrane biogenesis; LPS lipid A biosynthesis. Functionally, condensation of UDP-2,3-diacylglucosamine and 2,3-diacylglucosamine-1-phosphate to form lipid A disaccharide, a precursor of lipid A, a phosphorylated glycolipid that anchors the lipopolysaccharide to the outer membrane of the cell. This is Lipid-A-disaccharide synthase from Neisseria gonorrhoeae (strain ATCC 700825 / FA 1090).